A 343-amino-acid chain; its full sequence is Phosphate acyltransferase (343 aa).

This sequence belongs to the PlsX family. In terms of assembly, homodimer. Probably interacts with PlsY.

Its subcellular location is the cytoplasm. It carries out the reaction a fatty acyl-[ACP] + phosphate = an acyl phosphate + holo-[ACP]. It functions in the pathway lipid metabolism; phospholipid metabolism. Catalyzes the reversible formation of acyl-phosphate (acyl-PO(4)) from acyl-[acyl-carrier-protein] (acyl-ACP). This enzyme utilizes acyl-ACP as fatty acyl donor, but not acyl-CoA. The chain is Phosphate acyltransferase from Acidovorax sp. (strain JS42).